The chain runs to 253 residues: Testis-expressed protein 101 (253 aa).

An N-terminal signal peptide occupies residues 1-24 (MAACWVHYLLLLLLGVSHQTLAQS). Residues Asn-44, Asn-112, Asn-117, Asn-121, and Asn-162 are each glycosylated (N-linked (GlcNAc...) asparagine). In terms of domain architecture, UPAR/Ly6 1 spans 53–117 (ETCNPGELCQ…SNYCNSSLCN (65 aa)). The 76-residue stretch at 143-218 (CPTCVALGSC…KETCSYHSLL (76 aa)) folds into the UPAR/Ly6 2 domain. The GPI-anchor amidated serine moiety is linked to residue Ser-226. A propeptide spans 227–253 (RASGRSTSLWVLELLLPAVLVALTHFP) (removed in mature form).

As to quaternary structure, interacts with VAMP3. Interacts with LY6K. Interacts with DPEP3; co-localized on the cell surface of spermatocytes, spermatids, and testicular spermatozoa, co-localized only in cytoplasmic droplets of caput and corpus epididymal sperm. Interacts with ADAM5. N-glycosylated; by high mannose and/or biantennary complex and/or certain types of hybrid oligosaccharides; possesses different oligosaccharides chains according to its subcellular localization in the testis. In terms of processing, sheds from membrane raft by ACE and released from the cell surface of epididymal sperm while it passes through the caput epididymis leading to disappearance of TEX101 on spermatozoa; is essential to produce fertile spermatozoa.

Its subcellular location is the cell membrane. It is found in the membrane raft. The protein localises to the cytoplasmic vesicle. It localises to the secretory vesicle. The protein resides in the acrosome. Its subcellular location is the secreted. Its function is as follows. Plays a role in fertilization by controlling binding of sperm to zona pellucida and migration of spermatozoa into the oviduct. May play a role in signal transduction and promote protein tyrosine phosphorylation. This chain is Testis-expressed protein 101, found in Cricetulus griseus (Chinese hamster).